We begin with the raw amino-acid sequence, 225 residues long: Ribonuclease 3 (225 aa).

In terms of domain architecture, RNase III spans 2 to 128; sequence LSTLIKKLKI…LFGAIYLDLG (127 aa). Glu-43 is a binding site for Mg(2+). Asp-47 is an active-site residue. The Mg(2+) site is built by Asn-114 and Glu-117. The active site involves Glu-117. A DRBM domain is found at 152–220; the sequence is DFKTQLQELV…ARYVLNILSK (69 aa).

Belongs to the ribonuclease III family. In terms of assembly, homodimer. Mg(2+) serves as cofactor.

The protein resides in the cytoplasm. It catalyses the reaction Endonucleolytic cleavage to 5'-phosphomonoester.. In terms of biological role, digests double-stranded RNA. Involved in the processing of primary rRNA transcript to yield the immediate precursors to the large and small rRNAs (23S and 16S). Processes some mRNAs, and tRNAs when they are encoded in the rRNA operon. Processes pre-crRNA and tracrRNA of type II CRISPR loci if present in the organism. This is Ribonuclease 3 from Phytoplasma mali (strain AT).